A 168-amino-acid polypeptide reads, in one-letter code: Nuclear cap-binding protein subunit 2 (168 aa).

Residues Y23, Y46, 115 to 119, 126 to 130, and 136 to 137 each bind mRNA; these read RTDWD, RQYGR, and QV. The region spanning 43–121 is the RRM domain; sequence STLYVGNLSF…RIVRTDWDAG (79 aa).

The protein belongs to the RRM NCBP2 family. As to quaternary structure, component of the nuclear cap-binding complex (CBC), a heterodimer composed of NCBP1/CBP80 and NCBP2/CBP20 that interacts with m7GpppG-capped RNA.

Its subcellular location is the nucleus. It localises to the cytoplasm. In terms of biological role, component of the cap-binding complex (CBC), which binds co-transcriptionally to the 5' cap of pre-mRNAs and is involved in various processes such as pre-mRNA splicing, translation regulation, nonsense-mediated mRNA decay, RNA-mediated gene silencing (RNAi) by microRNAs (miRNAs) and mRNA export. The CBC complex is involved in mRNA export from the nucleus, leading to the recruitment of the mRNA export machinery to the 5' end of mRNA and to mRNA export in a 5' to 3' direction through the nuclear pore. The CBC complex is also involved in mediating U snRNA and intronless mRNAs export from the nucleus. The CBC complex is essential for a pioneer round of mRNA translation, before steady state translation when the CBC complex is replaced by cytoplasmic cap-binding protein eIF4E. The pioneer round of mRNA translation mediated by the CBC complex plays a central role in nonsense-mediated mRNA decay (NMD), NMD only taking place in mRNAs bound to the CBC complex, but not on eIF4E-bound mRNAs. The CBC complex enhances NMD in mRNAs containing at least one exon-junction complex (EJC), promoting the interaction between UPF1 and UPF2. The CBC complex is also involved in 'failsafe' NMD, which is independent of the EJC complex, while it does not participate in Staufen-mediated mRNA decay (SMD). During cell proliferation, the CBC complex is also involved in microRNAs (miRNAs) biogenesis via its interaction with SRRT/ARS2, thereby being required for miRNA-mediated RNA interference. The CBC complex also acts as a negative regulator of PARN, thereby acting as an inhibitor of mRNA deadenylation. In the CBC complex, NCBP2/CBP20 recognizes and binds capped RNAs (m7GpppG-capped RNA) but requires NCBP1/CBP80 to stabilize the movement of its N-terminal loop and lock the CBC into a high affinity cap-binding state with the cap structure. The conventional cap-binding complex with NCBP2 binds both small nuclear RNA (snRNA) and messenger (mRNA) and is involved in their export from the nucleus. The sequence is that of Nuclear cap-binding protein subunit 2 (NCBP2) from Gallus gallus (Chicken).